Here is a 1043-residue protein sequence, read N- to C-terminus: Unconventional myosin-Ia (1043 aa).

The Myosin motor domain maps to 8–694 (VGVEDLVLLE…TLFYLEEQRR (687 aa)). 101–108 (GESGAGKT) lines the ATP pocket. Positions 571-593 (VTTLMKNLYSKNPNYIRCIKPNE) are actin-binding. 3 IQ domains span residues 697-719 (LQQLATLIQKTYRGWRCRTHYQL), 720-742 (MRKSQIVISSWFRGNMQKKHYRK), and 743-772 (MKASALLIQAFVRGWKARKNYRKYFRSGAA). The region spanning 858–1042 (KASYPQSVPI…KGSRCLEVTV (185 aa)) is the TH1 domain.

The protein belongs to the TRAFAC class myosin-kinesin ATPase superfamily. Myosin family. In terms of processing, phosphorylated by ALPK1.

In terms of biological role, involved in directing the movement of organelles along actin filaments. This Bos taurus (Bovine) protein is Unconventional myosin-Ia (MYO1A).